Here is a 108-residue protein sequence, read N- to C-terminus: NADH dehydrogenase [ubiquinone] 1 alpha subcomplex subunit 8-A (108 aa).

CHCH domains follow at residues glycine 28–leucine 69 and histidine 70–lysine 108. 3 consecutive short sequence motifs (cx9C motif) follow at residues cysteine 31 to cysteine 41, cysteine 51 to cysteine 61, and cysteine 73 to cysteine 83. 4 cysteine pairs are disulfide-bonded: cysteine 31–cysteine 61, cysteine 41–cysteine 51, cysteine 73–cysteine 105, and cysteine 83–cysteine 94. Residues cysteine 94–cysteine 105 carry the Cx10C motif motif.

This sequence belongs to the complex I NDUFA8 subunit family. Complex I is composed of at least 49 different subunits.

The protein localises to the mitochondrion. It is found in the mitochondrion intermembrane space. Functionally, accessory subunit of the mitochondrial membrane respiratory chain NADH dehydrogenase (Complex I), that is believed not to be involved in catalysis. Complex I functions in the transfer of electrons from NADH to the respiratory chain. The immediate electron acceptor for the enzyme is believed to be ubiquinone. This is NADH dehydrogenase [ubiquinone] 1 alpha subcomplex subunit 8-A from Arabidopsis thaliana (Mouse-ear cress).